We begin with the raw amino-acid sequence, 518 residues long: Nitrogenase iron-iron protein alpha chain (518 aa).

3 residues coordinate [8Fe-7S] cluster: cysteine 49, cysteine 75, and cysteine 138. [8Fe-9S-C-homocitryl] cluster is bound by residues cysteine 257 and histidine 423.

Belongs to the NifD/NifK/NifE/NifN family. As to quaternary structure, hexamer of two alpha, two beta, and two delta chains. Requires [8Fe-7S] cluster as cofactor. The cofactor is [8Fe-9S-C-homocitryl] cluster.

It carries out the reaction N2 + 8 reduced [2Fe-2S]-[ferredoxin] + 16 ATP + 16 H2O = H2 + 8 oxidized [2Fe-2S]-[ferredoxin] + 2 NH4(+) + 16 ADP + 16 phosphate + 6 H(+). Its function is as follows. This iron-iron protein is part of the nitrogenase complex that catalyzes the key enzymatic reactions in nitrogen fixation. Other nitrogenase complexes utilize a molybdenum-iron protein or a vanadium-iron protein. The chain is Nitrogenase iron-iron protein alpha chain (anfD) from Azotobacter vinelandii.